The primary structure comprises 68 residues: Alpha-conotoxin-like Lp1.2 (68 aa).

The N-terminal stretch at 1 to 21 is a signal peptide; sequence MGMRMMFTVFLLVVLATTVVS. Residues 22–48 constitute a propeptide that is removed on maturation; the sequence is FTSDRAFDGRNAAASDKASDLISLAVR. 2 disulfide bridges follow: C50–C56 and C51–C64. The tract at residues 52–54 is ser-Xaa-Pro motif, crucial for potent interaction with nAChR; that stretch reads SHP. Cysteine amide is present on C64. A propeptide spanning residues 65–68 is cleaved from the precursor; sequence GGKR.

It belongs to the conotoxin A superfamily. In terms of tissue distribution, expressed by the venom duct.

The protein resides in the secreted. Functionally, alpha-conotoxins act on postsynaptic membranes, they bind to the nicotinic acetylcholine receptors (nAChR) and thus inhibit them. This chain is Alpha-conotoxin-like Lp1.2, found in Conus leopardus (Leopard cone).